The following is a 716-amino-acid chain: Fusoxypene synthase (716 aa).

Residues 4 to 328 are sesterterpenoid synthase; sequence LSYQSRLIPP…WLSACSRQNT (325 aa). Aspartate 96 serves as a coordination point for Mg(2+). Aspartate 96 provides a ligand contact to substrate. Positions 187–190 are substrate; sequence RMTN. Residue asparagine 231 coordinates substrate. The segment at 235–239 is substrate; the sequence is SYERE. Residues 329-711 are geranylfarnesyl diphosphate synthase; it reads WKTNCSIDGK…CLATLSMEGC (383 aa). Residues lysine 422, arginine 425, and histidine 454 each coordinate isopentenyl diphosphate. Residues aspartate 461 and aspartate 465 each coordinate Mg(2+). Arginine 470 contributes to the dimethylallyl diphosphate binding site. Arginine 471 contacts isopentenyl diphosphate. Dimethylallyl diphosphate-binding residues include lysine 548, threonine 549, glutamine 587, asparagine 594, and lysine 602.

This sequence in the N-terminal section; belongs to the terpene synthase family. It in the C-terminal section; belongs to the FPP/GGPP synthase family.

The enzyme catalyses 4 isopentenyl diphosphate + dimethylallyl diphosphate = (2E,6E,10E,14E)-geranylfarnesyl diphosphate + 4 diphosphate. It carries out the reaction (2E,6E,10E,14E)-geranylfarnesyl diphosphate = fusoxypene A + diphosphate. The catalysed reaction is (2E,6E,10E,14E)-geranylfarnesyl diphosphate = fusoxypene B + diphosphate. It catalyses the reaction (2E,6E,10E,14E)-geranylfarnesyl diphosphate = fusoxypene C + diphosphate. The enzyme catalyses (2E,6E,10E,14E)-geranylfarnesyl diphosphate = (-)-astellatene + diphosphate. Bifunctional sesterterpenoid synthase that performs both prenyl transferase and terpene cyclase activity, converting isopentenyl diphosphate and dimethylallyl diphosphate into geranylfarnesyl diphosphate (GFPP) and then converting GFPP into the enantiomeric sesterterpenes with a 5-6-7-3-5 ring system fusoxypene A, fusoxypene B, fusoxypene C and (-)-astellatene. The protein is Fusoxypene synthase of Fusarium oxysporum (Fusarium vascular wilt).